Reading from the N-terminus, the 72-residue chain is Translation initiation factor IF-1 (72 aa).

The S1-like domain occupies 1 to 72 (MAKEDCIEME…TKGRIKFRSK (72 aa)).

This sequence belongs to the IF-1 family. Component of the 30S ribosomal translation pre-initiation complex which assembles on the 30S ribosome in the order IF-2 and IF-3, IF-1 and N-formylmethionyl-tRNA(fMet); mRNA recruitment can occur at any time during PIC assembly.

The protein localises to the cytoplasm. One of the essential components for the initiation of protein synthesis. Stabilizes the binding of IF-2 and IF-3 on the 30S subunit to which N-formylmethionyl-tRNA(fMet) subsequently binds. Helps modulate mRNA selection, yielding the 30S pre-initiation complex (PIC). Upon addition of the 50S ribosomal subunit IF-1, IF-2 and IF-3 are released leaving the mature 70S translation initiation complex. The polypeptide is Translation initiation factor IF-1 (Francisella tularensis subsp. novicida (strain U112)).